The chain runs to 439 residues: 3-phosphoshikimate 1-carboxyvinyltransferase (439 aa).

Positions 31, 32, and 36 each coordinate 3-phosphoshikimate. Lysine 31 lines the phosphoenolpyruvate pocket. 2 residues coordinate phosphoenolpyruvate: glycine 103 and arginine 131. Positions 175, 177, 322, and 349 each coordinate 3-phosphoshikimate. Glutamine 177 provides a ligand contact to phosphoenolpyruvate. Aspartate 322 (proton acceptor) is an active-site residue. The phosphoenolpyruvate site is built by arginine 353 and arginine 397.

The protein belongs to the EPSP synthase family. Monomer.

It localises to the cytoplasm. It catalyses the reaction 3-phosphoshikimate + phosphoenolpyruvate = 5-O-(1-carboxyvinyl)-3-phosphoshikimate + phosphate. It participates in metabolic intermediate biosynthesis; chorismate biosynthesis; chorismate from D-erythrose 4-phosphate and phosphoenolpyruvate: step 6/7. Catalyzes the transfer of the enolpyruvyl moiety of phosphoenolpyruvate (PEP) to the 5-hydroxyl of shikimate-3-phosphate (S3P) to produce enolpyruvyl shikimate-3-phosphate and inorganic phosphate. The chain is 3-phosphoshikimate 1-carboxyvinyltransferase from Clostridium tetani (strain Massachusetts / E88).